The primary structure comprises 406 residues: Phosphopentomutase (406 aa).

Aspartate 10, aspartate 305, histidine 310, aspartate 346, histidine 347, and histidine 358 together coordinate Mn(2+).

This sequence belongs to the phosphopentomutase family. Requires Mn(2+) as cofactor.

It is found in the cytoplasm. The enzyme catalyses 2-deoxy-alpha-D-ribose 1-phosphate = 2-deoxy-D-ribose 5-phosphate. The catalysed reaction is alpha-D-ribose 1-phosphate = D-ribose 5-phosphate. It participates in carbohydrate degradation; 2-deoxy-D-ribose 1-phosphate degradation; D-glyceraldehyde 3-phosphate and acetaldehyde from 2-deoxy-alpha-D-ribose 1-phosphate: step 1/2. Its function is as follows. Isomerase that catalyzes the conversion of deoxy-ribose 1-phosphate (dRib-1-P) and ribose 1-phosphate (Rib-1-P) to deoxy-ribose 5-phosphate (dRib-5-P) and ribose 5-phosphate (Rib-5-P), respectively. This Vibrio parahaemolyticus serotype O3:K6 (strain RIMD 2210633) protein is Phosphopentomutase.